Reading from the N-terminus, the 467-residue chain is 3-isopropylmalate dehydratase large subunit (467 aa).

Positions 347, 407, and 410 each coordinate [4Fe-4S] cluster.

It belongs to the aconitase/IPM isomerase family. LeuC type 1 subfamily. As to quaternary structure, heterodimer of LeuC and LeuD. [4Fe-4S] cluster serves as cofactor.

The catalysed reaction is (2R,3S)-3-isopropylmalate = (2S)-2-isopropylmalate. Its pathway is amino-acid biosynthesis; L-leucine biosynthesis; L-leucine from 3-methyl-2-oxobutanoate: step 2/4. Catalyzes the isomerization between 2-isopropylmalate and 3-isopropylmalate, via the formation of 2-isopropylmaleate. This chain is 3-isopropylmalate dehydratase large subunit, found in Synechococcus sp. (strain JA-2-3B'a(2-13)) (Cyanobacteria bacterium Yellowstone B-Prime).